We begin with the raw amino-acid sequence, 1044 residues long: GRB10-interacting GYF protein 1 (1044 aa).

4 positions are modified to phosphoserine: Ser24, Ser28, Ser137, and Ser157. Disordered regions lie at residues 104–290 (GKGA…DGLP) and 306–424 (ASGA…LEDE). Basic and acidic residues-rich tracts occupy residues 148-179 (NPRE…RSGF) and 186-203 (PRKE…SLRE). Ser228 carries the post-translational modification Phosphoserine. Composition is skewed to basic and acidic residues over residues 237 to 265 (GWRE…EDGR) and 316 to 332 (GPKE…FRGL). Positions 333 to 350 (EEEEEEEEEPSEGVDEER) are enriched in acidic residues. Residue Ser343 is modified to Phosphoserine. Low complexity predominate over residues 366 to 379 (NSSSPSSLPALGPL). Residues 389-403 (AVEKELPPAEGDELR) are compositionally biased toward basic and acidic residues. The residue at position 408 (Ser408) is a Phosphoserine. The GYF domain maps to 476–524 (ARKWFYKDPQGEIQGPFTTQEMAEWFQAGYFSMSLLVKRGCDEGFQPLG). Residues Ser540 and Ser634 each carry the phosphoserine modification. The segment covering 692 to 706 (KREEEERKRREEKRR) has biased composition (basic and acidic residues). 6 disordered regions span residues 692-721 (KREE…RQEE), 820-842 (EAGP…LGLW), 855-883 (SLGL…RKKT), 966-987 (QKAS…QEAW), 1000-1019 (NHST…RALM), and 1024-1044 (PSIL…VDDY). Gly residues predominate over residues 829-839 (DKSGGSSGGNL). Composition is skewed to low complexity over residues 855–877 (SLGL…LSGR) and 970–984 (QQRQ…QQQQ). Residue Ser863 is modified to Phosphoserine.

Belongs to the GIGYF family. As to quaternary structure, interacts with GRB10. This transient binding is increased under IGF1 stimulation and leads to recruitment of GIGYF1/GRB10 complex to IGF1 receptor. Interacts with DDX6. In terms of tissue distribution, ubiquitous. Lower expression in skeletal muscle, liver and testis.

Functionally, may act cooperatively with GRB10 to regulate tyrosine kinase receptor signaling. May increase IGF1 receptor phosphorylation under IGF1 stimulation as well as phosphorylation of IRS1 and SHC1. In Mus musculus (Mouse), this protein is GRB10-interacting GYF protein 1 (Gigyf1).